The primary structure comprises 283 residues: Diphthine methyl ester synthase (283 aa).

S-adenosyl-L-methionine-binding positions include Leu9, Asp84, Gly87, 112–113 (SI), Leu163, Met221, and His246.

The protein belongs to the diphthine synthase family.

It localises to the cytoplasm. The catalysed reaction is 2-[(3S)-amino-3-carboxypropyl]-L-histidyl-[translation elongation factor 2] + 4 S-adenosyl-L-methionine = diphthine methyl ester-[translation elongation factor 2] + 4 S-adenosyl-L-homocysteine + 3 H(+). It functions in the pathway protein modification; peptidyl-diphthamide biosynthesis. Its function is as follows. S-adenosyl-L-methionine-dependent methyltransferase that catalyzes four methylations of the modified target histidine residue in translation elongation factor 2 (EF-2), to form an intermediate called diphthine methyl ester. The four successive methylation reactions represent the second step of diphthamide biosynthesis. The protein is Diphthine methyl ester synthase (dph5) of Schizosaccharomyces pombe (strain 972 / ATCC 24843) (Fission yeast).